The primary structure comprises 166 residues: MFPMVTEFMNYGQQTVRAARYIGQGFMITLSHANRLPVTIQYPYEKLITSERFRGRIHFEFDKCIACEVCVRVCPIDLPVVDWKLETDIRKKRLLNYSIDFGICIFCGNCVEYCPTNCLSMTEEYELSTYDRHELNYTQIALGRLPMSIIDDYTIRTILNLPEIKT.

2 consecutive 4Fe-4S ferredoxin-type domains span residues 55–84 (GRIHFEFDKCIACEVCVRVCPIDLPVVDWK) and 95–124 (LNYSIDFGICIFCGNCVEYCPTNCLSMTEE). Positions 64, 67, 70, 74, 104, 107, 110, and 114 each coordinate [4Fe-4S] cluster.

This sequence belongs to the complex I 23 kDa subunit family. In terms of assembly, NDH is composed of at least 16 different subunits, 5 of which are encoded in the nucleus. The cofactor is [4Fe-4S] cluster.

The protein localises to the plastid. It localises to the chloroplast thylakoid membrane. It catalyses the reaction a plastoquinone + NADH + (n+1) H(+)(in) = a plastoquinol + NAD(+) + n H(+)(out). It carries out the reaction a plastoquinone + NADPH + (n+1) H(+)(in) = a plastoquinol + NADP(+) + n H(+)(out). Functionally, NDH shuttles electrons from NAD(P)H:plastoquinone, via FMN and iron-sulfur (Fe-S) centers, to quinones in the photosynthetic chain and possibly in a chloroplast respiratory chain. The immediate electron acceptor for the enzyme in this species is believed to be plastoquinone. Couples the redox reaction to proton translocation, and thus conserves the redox energy in a proton gradient. In Melampodium leucanthum (Black foot daisy), this protein is NAD(P)H-quinone oxidoreductase subunit I, chloroplastic.